The chain runs to 333 residues: L-lactate dehydrogenase A chain (333 aa).

NAD(+) is bound by residues 30–58 (GMVG…MEDK) and R100. Substrate contacts are provided by R107, N139, and R170. N139 is a binding site for NAD(+). H194 functions as the Proton acceptor in the catalytic mechanism. Substrate is bound at residue T249.

This sequence belongs to the LDH/MDH superfamily. LDH family. In terms of assembly, homotetramer.

It is found in the cytoplasm. It carries out the reaction (S)-lactate + NAD(+) = pyruvate + NADH + H(+). Its pathway is fermentation; pyruvate fermentation to lactate; (S)-lactate from pyruvate: step 1/1. Its function is as follows. Interconverts simultaneously and stereospecifically pyruvate and lactate with concomitant interconversion of NADH and NAD(+). This chain is L-lactate dehydrogenase A chain (ldha), found in Danio rerio (Zebrafish).